The following is a 393-amino-acid chain: uncharacterized protein (393 aa).

The interval 164–183 (ASDPHPGKNSPASPTGENKE) is disordered. Over residues 173–183 (SPASPTGENKE) the composition is skewed to polar residues.

This is an uncharacterized protein from Treponema pallidum (strain Nichols).